An 85-amino-acid chain; its full sequence is uncharacterized protein (85 aa).

A run of 2 helical transmembrane segments spans residues 14 to 34 (FLFG…RATI) and 60 to 80 (IFVY…IYFL).

It is found in the cell membrane. This is an uncharacterized protein from Escherichia coli O157:H7.